The sequence spans 535 residues: Ribonuclease Y (535 aa).

The chain crosses the membrane as a helical span at residues 4 to 24; it reads IILLIVSALIGLILGYALISI. A disordered region spans residues 118–141; sequence ENLSSKEKVLDSKEQSLTDKSKHI. One can recognise a KH domain in the interval 225-285; that stretch reads TITSVHLPDD…IRREIARMTL (61 aa). The region spanning 351–444 is the HD domain; it reads VLRHSVEVGK…VAAADALSSA (94 aa).

It belongs to the RNase Y family.

The protein localises to the cell membrane. Functionally, endoribonuclease that initiates mRNA decay. In Streptococcus pyogenes serotype M2 (strain MGAS10270), this protein is Ribonuclease Y.